A 304-amino-acid chain; its full sequence is Non-specific ribonucleoside hydrolase RihC (304 aa).

H233 is an active-site residue.

This sequence belongs to the IUNH family. RihC subfamily.

In terms of biological role, hydrolyzes both purine and pyrimidine ribonucleosides with a broad-substrate specificity. This Escherichia coli O17:K52:H18 (strain UMN026 / ExPEC) protein is Non-specific ribonucleoside hydrolase RihC.